Consider the following 1377-residue polypeptide: DNA-directed RNA polymerase subunit beta'' (1377 aa).

Residues Cys224, Cys294, Cys301, and Cys304 each coordinate Zn(2+).

This sequence belongs to the RNA polymerase beta' chain family. RpoC2 subfamily. In terms of assembly, in plastids the minimal PEP RNA polymerase catalytic core is composed of four subunits: alpha, beta, beta', and beta''. When a (nuclear-encoded) sigma factor is associated with the core the holoenzyme is formed, which can initiate transcription. Zn(2+) serves as cofactor.

The protein localises to the plastid. The protein resides in the chloroplast. The catalysed reaction is RNA(n) + a ribonucleoside 5'-triphosphate = RNA(n+1) + diphosphate. Its function is as follows. DNA-dependent RNA polymerase catalyzes the transcription of DNA into RNA using the four ribonucleoside triphosphates as substrates. This Calycanthus floridus var. glaucus (Eastern sweetshrub) protein is DNA-directed RNA polymerase subunit beta''.